The following is a 69-amino-acid chain: MTNASKPPVVNCPICGATVKWLAENRWKPFCSERCKLIDLGQWATEKYRVPVEPKPDEGETPDQAERPQ.

Residues cysteine 12, cysteine 15, cysteine 31, and cysteine 35 each coordinate Zn(2+). The segment at 49 to 69 (RVPVEPKPDEGETPDQAERPQ) is disordered.

The protein belongs to the DNA gyrase inhibitor YacG family. As to quaternary structure, interacts with GyrB. Requires Zn(2+) as cofactor.

Inhibits all the catalytic activities of DNA gyrase by preventing its interaction with DNA. Acts by binding directly to the C-terminal domain of GyrB, which probably disrupts DNA binding by the gyrase. This is DNA gyrase inhibitor YacG from Thiobacillus denitrificans (strain ATCC 25259 / T1).